The primary structure comprises 353 residues: Ribosomal RNA small subunit methyltransferase H (353 aa).

S-adenosyl-L-methionine is bound by residues 39–41 (AGH), D58, F90, D108, and Q115. The disordered stretch occupies residues 334-353 (SEDGVRGAHGHRRRTQARRG). Over residues 341-353 (AHGHRRRTQARRG) the composition is skewed to basic residues.

This sequence belongs to the methyltransferase superfamily. RsmH family.

It localises to the cytoplasm. It catalyses the reaction cytidine(1402) in 16S rRNA + S-adenosyl-L-methionine = N(4)-methylcytidine(1402) in 16S rRNA + S-adenosyl-L-homocysteine + H(+). Functionally, specifically methylates the N4 position of cytidine in position 1402 (C1402) of 16S rRNA. This Bifidobacterium animalis subsp. lactis (strain AD011) protein is Ribosomal RNA small subunit methyltransferase H.